The primary structure comprises 240 residues: Transcriptional regulatory protein ChvI (240 aa).

Positions Thr-3–Leu-116 constitute a Response regulatory domain. Mg(2+) contacts are provided by Asp-8, Asp-9, and Asp-52. Asp-52 carries the post-translational modification 4-aspartylphosphate. Positions Ser-139–Glu-238 form a DNA-binding region, ompR/PhoB-type.

Mg(2+) is required as a cofactor. Phosphorylated by ChvG.

The protein localises to the cytoplasm. It functions in the pathway glycan metabolism; exopolysaccharide biosynthesis. In terms of biological role, member of a two-component regulatory system ChvG(ExoS)/ChvI involved in regulating the production of succinoglycan. The chain is Transcriptional regulatory protein ChvI (chvI) from Rhizobium meliloti (strain 1021) (Ensifer meliloti).